A 38-amino-acid chain; its full sequence is Toxin Bot33 (38 aa).

Intrachain disulfides connect Cys8–Cys28, Cys14–Cys33, and Cys18–Cys35.

It belongs to the short scorpion toxin superfamily. Potassium channel inhibitor family. As to expression, expressed by the venom gland.

The protein resides in the secreted. In terms of biological role, a probable toxin that has no activity on the tested mammalian voltage-gated potassium channels (when tested at 1 uM) and is not toxic to mice. It resembles alpha toxins that block voltage-gated potassium channels. The chain is Toxin Bot33 from Buthus occitanus tunetanus (Common European scorpion).